The primary structure comprises 221 residues: Histone H1.3 (221 aa).

The span at 1-17 (MSETAPVAPAAPAPAEK) shows a compositional bias: low complexity. Positions 1–42 (MSETAPVAPAAPAPAEKTPVKKKAKKSGVAAGKRKASGPPVS) are disordered. Ser2 carries the post-translational modification N-acetylserine. Position 2 is a phosphoserine (Ser2). The residue at position 17 (Lys17) is an N6-acetyllysine. At Thr18 the chain carries Phosphothreonine. Residues 20 to 36 (VKKKAKKSGVAAGKRKA) show a composition bias toward basic residues. Lys35 and Lys53 each carry N6-(beta-hydroxybutyryl)lysine. The H15 domain occupies 37–110 (SGPPVSELIT…GASGSFKLNK (74 aa)). Arg55 carries the post-translational modification Citrulline. An N6-(beta-hydroxybutyryl)lysine mark is found at Lys65, Lys86, and Lys91. Positions 87–221 (SLVSKGTLVQ…KAKKAVSKKK (135 aa)) are disordered. Residue Ser105 is modified to Phosphoserine; by PKC. The residue at position 107 (Lys107) is an N6-(beta-hydroxybutyryl)lysine. Composition is skewed to basic residues over residues 120-141 (KGKK…KPKK), 150-161 (KAAKKTPKKVKK), 170-187 (KVAK…KKPT), and 194-221 (KAPK…SKKK).

Belongs to the histone H1/H5 family. Post-translationally, H1 histones are progressively phosphorylated during the cell cycle, becoming maximally phosphorylated during late G2 phase and M phase, and being dephosphorylated sharply thereafter. Citrullination at Arg-55 (H1R54ci) by PADI4 takes place within the DNA-binding site of H1 and results in its displacement from chromatin and global chromatin decondensation, thereby promoting pluripotency and stem cell maintenance.

The protein resides in the nucleus. Its subcellular location is the chromosome. Its function is as follows. H1 histones bind to linker DNA between nucleosomes forming the macromolecular structure known as the chromatin fiber. H1 histones are necessary for the condensation of nucleosome chains into higher-order structured fibers. Also acts as a regulator of individual gene transcription through chromatin remodeling, nucleosome spacing and DNA methylation. The polypeptide is Histone H1.3 (Bos taurus (Bovine)).